We begin with the raw amino-acid sequence, 129 residues long: Methylmalonyl-CoA decarboxylase subunit gamma (129 aa).

2 stretches are compositionally biased toward low complexity: residues 24-39 (APAA…APAP) and 49-58 (PAAAAAPVPA). Positions 24–58 (APAAAPKAAPAAAPAPKAAPAPAPAPAAAAAPVPA) are disordered. The 79-residue stretch at 51-129 (AAAAPVPAGA…STGDDMVVLG (79 aa)) folds into the Biotinyl-binding domain. Residue Lys95 is modified to N6-biotinyllysine.

The methylmalonyl-CoA decarboxylase is composed of five subunits: the carboxyltransferase alpha subunit (MmdA), the tunnel beta subunit (MmdB), the biotin-containing gamma subunit (MmdC), and the delta (MmdD) and epsilon (MmdE) subunits. It depends on biotin as a cofactor.

The protein localises to the cell membrane. The catalysed reaction is (S)-methylmalonyl-CoA + Na(+)(in) + H(+)(out) = propanoyl-CoA + Na(+)(out) + CO2. Its activity is regulated as follows. Completely inhibited by avidin. Biotin-containing subunit of the sodium ion pump methylmalonyl-CoA decarboxylase, which converts the chemical energy of a decarboxylation reaction into an electrochemical gradient of Na(+) ions across the cytoplasmic membrane, thereby creating a sodium ion motive force that is used for ATP synthesis. Can also convert malonyl-CoA into acetyl-CoA. This is Methylmalonyl-CoA decarboxylase subunit gamma from Veillonella parvula (Staphylococcus parvulus).